A 384-amino-acid chain; its full sequence is Cell division protein FtsZ (384 aa).

Residues 20 to 24, 107 to 109, Glu138, Arg142, and Asn186 contribute to the GTP site; these read GGGGN and GTG.

Belongs to the FtsZ family. In terms of assembly, homodimer. Polymerizes to form a dynamic ring structure in a strictly GTP-dependent manner. Interacts directly with several other division proteins.

The protein resides in the cytoplasm. Functionally, essential cell division protein that forms a contractile ring structure (Z ring) at the future cell division site. The regulation of the ring assembly controls the timing and the location of cell division. One of the functions of the FtsZ ring is to recruit other cell division proteins to the septum to produce a new cell wall between the dividing cells. Binds GTP and shows GTPase activity. This chain is Cell division protein FtsZ, found in Buchnera aphidicola subsp. Schizaphis graminum (strain Sg).